We begin with the raw amino-acid sequence, 190 residues long: Small ribosomal subunit protein uS5 (190 aa).

The S5 DRBM domain occupies 22–85 (FVDKLVHINR…ESAKRNLTRV (64 aa)).

Belongs to the universal ribosomal protein uS5 family. As to quaternary structure, part of the 30S ribosomal subunit. Contacts proteins S4 and S8.

In terms of biological role, with S4 and S12 plays an important role in translational accuracy. Functionally, located at the back of the 30S subunit body where it stabilizes the conformation of the head with respect to the body. The sequence is that of Small ribosomal subunit protein uS5 from Rhodopseudomonas palustris (strain BisA53).